Reading from the N-terminus, the 301-residue chain is Probable alpha-L-glutamate ligase (301 aa).

The ATP-grasp domain maps to Leu-104–Glu-287. Residues Lys-141, Glu-178–Tyr-179, Asp-187, and Arg-211–Asn-213 each bind ATP. Mg(2+) is bound by residues Asp-248, Glu-260, and Asn-262. Positions 248, 260, and 262 each coordinate Mn(2+).

It belongs to the RimK family. Mg(2+) is required as a cofactor. Mn(2+) serves as cofactor.

This chain is Probable alpha-L-glutamate ligase, found in Azotobacter vinelandii (strain DJ / ATCC BAA-1303).